A 217-amino-acid chain; its full sequence is Cytidylate kinase (217 aa).

9–17 (GPAGAGKST) serves as a coordination point for ATP.

Belongs to the cytidylate kinase family. Type 1 subfamily.

The protein localises to the cytoplasm. The enzyme catalyses CMP + ATP = CDP + ADP. It catalyses the reaction dCMP + ATP = dCDP + ADP. The sequence is that of Cytidylate kinase from Clostridium acetobutylicum (strain ATCC 824 / DSM 792 / JCM 1419 / IAM 19013 / LMG 5710 / NBRC 13948 / NRRL B-527 / VKM B-1787 / 2291 / W).